A 201-amino-acid polypeptide reads, in one-letter code: Ras-related protein RabA (201 aa).

Residue 15-22 (GDSGVGKS) participates in GTP binding. Positions 37–45 (YISTIGVDF) match the Effector region motif. GTP is bound by residues 63-67 (DTAGQ) and 121-124 (NKSD). C198 is modified (cysteine methyl ester). A lipid anchor (S-geranylgeranyl cysteine) is attached at C198. Positions 199–201 (IIN) are cleaved as a propeptide — removed in mature form.

This sequence belongs to the small GTPase superfamily. Rab family.

The protein localises to the cell membrane. The sequence is that of Ras-related protein RabA (rabA) from Dictyostelium discoideum (Social amoeba).